The following is a 493-amino-acid chain: EGF-containing fibulin-like extracellular matrix protein 1 (493 aa).

Positions 1–17 (MLKALFLTMLTLALVKS) are cleaved as a signal peptide. One can recognise an EGF-like 1; atypical domain in the interval 26–71 (YTQCTDGYEWDPVRQQCKDIDECDIVPDACKGGMKCVNHYGGYLCL). The 41-residue stretch at 173–213 (DIDECTAGTHNCRADQVCINLRGSFACQCPPGYQKRGEQCV) folds into the EGF-like 2; calcium-binding domain. Disulfide bonds link C177-C190, C184-C199, C201-C212, C218-C228, C224-C237, C239-C252, C258-C268, C264-C277, C279-C292, C298-C309, C305-C318, C320-C332, C338-C350, C344-C359, and C365-C377. One can recognise an EGF-like 3; calcium-binding domain in the interval 214 to 253 (DIDECTIPPYCHQRCVNTPGSFYCQCSPGFQLAANNYTCV). A glycan (N-linked (GlcNAc...) asparagine) is linked at N249. In terms of domain architecture, EGF-like 4; calcium-binding spans 254-293 (DINECDASNQCAQQCYNILGSFICQCNQGYELSSDRLNCE). The segment at 259–493 (DASNQCAQQC…LTIIVGPFSF (235 aa)) is mediates interaction with TIMP3. Residues 294–333 (DIDECRTSSYLCQYQCVNEPGKFSCMCPQGYQVVRSRTCQ) enclose the EGF-like 5; calcium-binding domain. The region spanning 334 to 378 (DINECETTNECREDEMCWNYHGGFRCYPRNPCQDPYILTPENRCV) is the EGF-like 6; calcium-binding domain.

The protein belongs to the fibulin family. In terms of assembly, interacts with ECM1. Interacts with TIMP3.

Its subcellular location is the secreted. It localises to the extracellular space. It is found in the extracellular matrix. Binds EGFR, the EGF receptor, inducing EGFR autophosphorylation and the activation of downstream signaling pathways. May play a role in cell adhesion and migration. May function as a negative regulator of chondrocyte differentiation. In the olfactory epithelium, it may regulate glial cell migration, differentiation and the ability of glial cells to support neuronal neurite outgrowth. The polypeptide is EGF-containing fibulin-like extracellular matrix protein 1 (EFEMP1) (Macaca fascicularis (Crab-eating macaque)).